The primary structure comprises 511 residues: MDFFSTSSLSSYYHLIFTILAFVISSIIYFLSKKAESKKLKLPPGPPGWPVVGNLLQVARSGKPFFQIMRELRQKYGPIFTLRMGTRTMIILSNADLVHEALILKGQVFATRPRENPTRTVFSCDKFTVNAAVYGPVWRSLRKNMVQNGLSSIRLKEFRAVRKSAMDKMIEKIRAEADANEGVVWVLKNARFAVFCILLAMCFGVEMDEKTIEKIDQMMKSVLIALDPRLDDYLPILSPFFSKQRKHAMDVRKQQIKTIVPFIEQRKKILESPEIDKTAASFSYLDTLFDLKIEGRNSTPTYPELVTLCSEFLNGGTDTTATAIEWAIGRLIENPNIQSQLYEEIKKTVGENKIDEKDIEKMPYLNAVVKELLRKHPPTYMSLTHAVTEPAKLGGYDIPTGVNVEIFLPGISDDPNLWSEPEKFDPDRFYLGKEDADITGVSGVKMIPFGMGRRICPGLNMATVHVSLMLARLVQEFEWADPENTRVDFTEKLEFTVVMKNTLRAKIKPRM.

Cys-456 contributes to the heme binding site.

It belongs to the cytochrome P450 family. It depends on heme as a cofactor.

This Solanum melongena (Eggplant) protein is Cytochrome P450 77A2 (CYP77A2).